Here is an 89-residue protein sequence, read N- to C-terminus: Small ribosomal subunit protein uS15 (89 aa).

Belongs to the universal ribosomal protein uS15 family. In terms of assembly, part of the 30S ribosomal subunit. Forms a bridge to the 50S subunit in the 70S ribosome, contacting the 23S rRNA.

Functionally, one of the primary rRNA binding proteins, it binds directly to 16S rRNA where it helps nucleate assembly of the platform of the 30S subunit by binding and bridging several RNA helices of the 16S rRNA. In terms of biological role, forms an intersubunit bridge (bridge B4) with the 23S rRNA of the 50S subunit in the ribosome. This chain is Small ribosomal subunit protein uS15, found in Histophilus somni (strain 129Pt) (Haemophilus somnus).